The chain runs to 592 residues: Putative D-/L-hydantoinase subunit B (592 aa).

This sequence belongs to the HyuB family. In terms of assembly, may form a complex with HyuA.

In terms of biological role, involved in the asymmetric conversion of racemic 5-substituted hydantoins to the corresponding L-amino acids. HyuA and HyuB are both required for the conversion of D- and L-5-substituted hydantoins to corresponding N-carbamoyl-D- and N-carbamoyl-L-amino acids, respectively. The polypeptide is Putative D-/L-hydantoinase subunit B (Pseudomonas sp. (strain NS671)).